Reading from the N-terminus, the 376-residue chain is 23S rRNA (uracil(747)-C(5))-methyltransferase RlmC (376 aa).

Residues C3, C11, C14, and C88 each contribute to the [4Fe-4S] cluster site. Positions 213, 242, 263, and 308 each coordinate S-adenosyl-L-methionine. C335 functions as the Nucleophile in the catalytic mechanism.

This sequence belongs to the class I-like SAM-binding methyltransferase superfamily. RNA M5U methyltransferase family. RlmC subfamily.

The catalysed reaction is uridine(747) in 23S rRNA + S-adenosyl-L-methionine = 5-methyluridine(747) in 23S rRNA + S-adenosyl-L-homocysteine + H(+). Functionally, catalyzes the formation of 5-methyl-uridine at position 747 (m5U747) in 23S rRNA. In Vibrio vulnificus (strain CMCP6), this protein is 23S rRNA (uracil(747)-C(5))-methyltransferase RlmC.